A 350-amino-acid chain; its full sequence is Protein-glutamate methylesterase/protein-glutamine glutaminase (350 aa).

The Response regulatory domain occupies 5–122 (KVLCVDDSAL…RDGLIEYSEV (118 aa)). A 4-aspartylphosphate modification is found at D56. The 195-residue stretch at 152-346 (PFASSEKLVI…ERILTRLGDR (195 aa)) folds into the CheB-type methylesterase domain. Residues S165, H191, and D288 contribute to the active site.

This sequence belongs to the CheB family. In terms of processing, phosphorylated by CheA. Phosphorylation of the N-terminal regulatory domain activates the methylesterase activity.

It localises to the cytoplasm. It carries out the reaction [protein]-L-glutamate 5-O-methyl ester + H2O = L-glutamyl-[protein] + methanol + H(+). It catalyses the reaction L-glutaminyl-[protein] + H2O = L-glutamyl-[protein] + NH4(+). Functionally, involved in chemotaxis. Part of a chemotaxis signal transduction system that modulates chemotaxis in response to various stimuli. Catalyzes the demethylation of specific methylglutamate residues introduced into the chemoreceptors (methyl-accepting chemotaxis proteins or MCP) by CheR. Also mediates the irreversible deamidation of specific glutamine residues to glutamic acid. The chain is Protein-glutamate methylesterase/protein-glutamine glutaminase from Bordetella bronchiseptica (strain ATCC BAA-588 / NCTC 13252 / RB50) (Alcaligenes bronchisepticus).